Here is a 952-residue protein sequence, read N- to C-terminus: Protocadherin-20 (952 aa).

Residues 1–60 (MRGRGNARSLLVQAVSLRPATWHPCLDMGHLHRPSSRTSHRNLPHVFLLFLFVGPFNCLA) form the signal peptide. The Extracellular portion of the chain corresponds to 61–891 (SYSRATELLY…VESMSCMPTL (831 aa)). 6 Cadherin domains span residues 64-210 (RATE…APQF), 211-321 (PISE…CPLF), 322-536 (IDSQ…APVF), 537-640 (LQPL…SPRF), 641-743 (INKD…PPLV), and 747-864 (QSNM…EPEI). N-linked (GlcNAc...) asparagine glycosylation occurs at Asn135. 2 N-linked (GlcNAc...) asparagine glycosylation sites follow: Asn327 and Asn333. Residues Asn681, Asn749, Asn804, Asn845, and Asn850 are each glycosylated (N-linked (GlcNAc...) asparagine). The helical transmembrane segment at 892–912 (VALSVISLGSITLVTGMGIYI) threads the bilayer. Topologically, residues 913 to 952 (CLRKGKKHHREDDNLEVQIPLKGKIDLCMRERKPVDISNI) are cytoplasmic.

It is found in the cell membrane. Functionally, potential calcium-dependent cell-adhesion protein. The sequence is that of Protocadherin-20 (Pcdh20) from Mus musculus (Mouse).